A 56-amino-acid chain; its full sequence is Small ribosomal subunit protein uS14 (56 aa).

Zn(2+)-binding residues include cysteine 21, cysteine 24, cysteine 39, and cysteine 42.

Belongs to the universal ribosomal protein uS14 family. In terms of assembly, component of the 40S small ribosomal subunit. Requires Zn(2+) as cofactor.

Its subcellular location is the cytoplasm. It is found in the cytosol. The protein resides in the rough endoplasmic reticulum. This is Small ribosomal subunit protein uS14 (RpS29) from Lysiphlebus testaceipes (Greenbugs aphid parastoid).